Consider the following 447-residue polypeptide: MRNPGAQDNVSVSQGMRAMFYMMKPSETAFQTVEEVPDYVKKATPFFIFLILLELVVSWILKGKPSGRLDDILTSMSAGVVSRLPNLFFRSLEVTSYIYIWENYRVCELPWDSPWTWYLTFLGVDFGYYWFHRMAHEINIIWAAHQAHHSSEDYNLSTALRQSVLQQYSSWVFYCPLALFVPPSVFAVHIQFNLLYQFWIHTEVIRTLGPLELVLNTPSHHRVHHGRNRYCIDKNYAGTLIIWDRIFGTFEAENEQVIYGLTHPIGTFEPFKVQFHHLLYIWTTFWATPGFCHKFSVLFKGPGWGPGKPRLGLSEEIPEVTGQEVPFTSSASQFLKIYAVLQFAVMLVFYEETFANTAVLSQVTILLRICFIILTLTSIGFLLDQRPKAAIVETLRCLLFLTLYRFGHLKPLIESLSFAFEIFFSVCIAFWGVRSITHLASGSWKKP.

The next 2 membrane-spanning stretches (helical) occupy residues 43–63 (ATPF…ILKG) and 111–131 (WDSP…YYWF). Residues 118 to 249 (YLTFLGVDFG…LIIWDRIFGT (132 aa)) enclose the Fatty acid hydroxylase domain. The short motif at 132–136 (HRMAH) is the Histidine box-1 element. Positions 145–149 (HQAHH) match the Histidine box-2 motif. The helical transmembrane segment at 170–190 (SWVFYCPLALFVPPSVFAVHI) threads the bilayer. The short motif at 221-225 (HRVHH) is the Histidine box-3 element. 3 helical membrane-spanning segments follow: residues 334-354 (FLKI…EETF), 363-383 (VTIL…GFLL), and 413-433 (IESL…FWGV).

The protein belongs to the sterol desaturase family. TMEM195 subfamily. It depends on Fe cation as a cofactor.

Its subcellular location is the endoplasmic reticulum membrane. It catalyses the reaction 1-O-(1,2-saturated-alkyl)-sn-glycerol + (6R)-L-erythro-5,6,7,8-tetrahydrobiopterin + O2 = a 1-(1-hydroxyalkyl)-sn-glycerol + (6R)-L-erythro-6,7-dihydrobiopterin + H2O. Its function is as follows. Glyceryl-ether monooxygenase that cleaves the O-alkyl bond of ether lipids. Ether lipids are essential components of brain membranes. This chain is Alkylglycerol monooxygenase (Agmo), found in Rattus norvegicus (Rat).